Consider the following 716-residue polypeptide: Translation initiation factor IF-2 (716 aa).

Positions 50–137 are disordered; that stretch reads FKKSAKPAGN…KPKKELPEKI (88 aa). The span at 92–101 shows a compositional bias: low complexity; it reads NNVQNTQFNN. A compositionally biased stretch (basic residues) spans 102 to 118; it reads KNKKKNNNNKKNKRGKN. Residues 125–137 are compositionally biased toward basic and acidic residues; it reads KQFKPKKELPEKI. Residues 217-386 form the tr-type G domain; it reads IRPPVVTIMG…LLVSEVEELK (170 aa). The segment at 226-233 is G1; the sequence is GHVDHGKT. Residue 226 to 233 participates in GTP binding; sequence GHVDHGKT. The segment at 251–255 is G2; the sequence is GITQH. The interval 272 to 275 is G3; the sequence is DTPG. Residues 272 to 276 and 326 to 329 contribute to the GTP site; these read DTPGH and NKID. The segment at 326-329 is G4; that stretch reads NKID. Residues 362–364 are G5; it reads SAL.

It belongs to the TRAFAC class translation factor GTPase superfamily. Classic translation factor GTPase family. IF-2 subfamily.

It localises to the cytoplasm. Its function is as follows. One of the essential components for the initiation of protein synthesis. Protects formylmethionyl-tRNA from spontaneous hydrolysis and promotes its binding to the 30S ribosomal subunits. Also involved in the hydrolysis of GTP during the formation of the 70S ribosomal complex. The polypeptide is Translation initiation factor IF-2 (Bacillus licheniformis (strain ATCC 14580 / DSM 13 / JCM 2505 / CCUG 7422 / NBRC 12200 / NCIMB 9375 / NCTC 10341 / NRRL NRS-1264 / Gibson 46)).